A 430-amino-acid polypeptide reads, in one-letter code: Glutamate-1-semialdehyde 2,1-aminomutase (430 aa).

K267 carries the N6-(pyridoxal phosphate)lysine modification.

The protein belongs to the class-III pyridoxal-phosphate-dependent aminotransferase family. HemL subfamily. In terms of assembly, homodimer. Pyridoxal 5'-phosphate serves as cofactor.

It localises to the cytoplasm. The catalysed reaction is (S)-4-amino-5-oxopentanoate = 5-aminolevulinate. Its pathway is porphyrin-containing compound metabolism; protoporphyrin-IX biosynthesis; 5-aminolevulinate from L-glutamyl-tRNA(Glu): step 2/2. The sequence is that of Glutamate-1-semialdehyde 2,1-aminomutase from Natranaerobius thermophilus (strain ATCC BAA-1301 / DSM 18059 / JW/NM-WN-LF).